Reading from the N-terminus, the 189-residue chain is Mediator of RNA polymerase II transcription subunit 30 (189 aa).

Residues 138 to 178 are a coiled coil; sequence SPESEDEIEKLEEQALSLRMEIAKKNVHVKELIDKLRELIA.

This sequence belongs to the plant Mediator complex subunit 30 family. Component of the Mediator complex.

It localises to the nucleus. Functionally, component of the Mediator complex, a coactivator involved in the regulated transcription of nearly all RNA polymerase II-dependent genes. Mediator functions as a bridge to convey information from gene-specific regulatory proteins to the basal RNA polymerase II transcription machinery. The Mediator complex, having a compact conformation in its free form, is recruited to promoters by direct interactions with regulatory proteins and serves for the assembly of a functional preinitiation complex with RNA polymerase II and the general transcription factors. In Arabidopsis thaliana (Mouse-ear cress), this protein is Mediator of RNA polymerase II transcription subunit 30 (MED30).